The sequence spans 106 residues: UPF0060 membrane protein Csal_2746 (106 aa).

A run of 4 helical transmembrane segments spans residues 6–26, 31–51, 59–79, and 85–105; these read LLFIATAMAEIIGCYLPWLWL, SPWLLVPAAASLTLFVWLLSL, VYAAYGGVYVVCALVWLWGVD, and PTDWIGAALALTGMGVIASGW.

It belongs to the UPF0060 family.

It is found in the cell inner membrane. This Chromohalobacter salexigens (strain ATCC BAA-138 / DSM 3043 / CIP 106854 / NCIMB 13768 / 1H11) protein is UPF0060 membrane protein Csal_2746.